The chain runs to 684 residues: Phenoloxidase 2 (684 aa).

A propeptide spans 1 to 51 (MSNTAVLNDLVALYDRPTEPMFRVKAKKSFKVPKEYVTDRFKNVAVEISNR) (removed by PPAF1). Asparagine 81 and asparagine 91 each carry an N-linked (GlcNAc...) asparagine glycan. The Cu cation site is built by histidine 209, histidine 213, and histidine 238. Residue asparagine 330 is glycosylated (N-linked (GlcNAc...) asparagine). Glutamate 350 serves as the catalytic Proton acceptor. The Cu cation site is built by histidine 365, histidine 369, and histidine 405. Residues asparagine 416, asparagine 487, asparagine 491, and asparagine 546 are each glycosylated (N-linked (GlcNAc...) asparagine). 2 disulfides stabilise this stretch: cysteine 581-cysteine 623 and cysteine 583-cysteine 630.

It belongs to the tyrosinase family. In terms of assembly, dimer. Might form a homodimer or a heterodimer with PPO1. Might interact with PPAF2 (via CLIP domain); the interaction might be required for PPO2 activity. The cofactor is Cu(2+). Precursor cleaved by PPAF1. As to expression, hemocytes.

It localises to the secreted. Its function is as follows. This is a copper-containing oxidase that functions in the formation of pigments such as melanins and other polyphenolic compounds. Catalyzes the oxidation of o-diphenols (N-acetyldopamine, 4-methylcatechol and dopamine). Cannot oxidize monophenols and p-phenols (L-tyrosine, tyramine, gentisic acid and hydroquinone). Binds to the surface of hemocytes and is involved in hemocyte melanization. Activation of the enzyme in response to bacterial lipopolysaccharides (LPS) suggests it may play a role in innate immunity. This is Phenoloxidase 2 from Holotrichia diomphalia (Korean black chafer).